The sequence spans 249 residues: MVRYKATISYDGTLFSGFQRQRHLRTVQEEIEKTLYKLNNGTKIIIHGAGRTDAGVHAYGQVIHFDLPQEQEVEKLRFALDTQTPEDIDVVNIEKVADDFHCRYQKHLKTYEFLVDNGRPKNPMMRHYTTHYPYTLNIKLMQDAINGLVGTHDFTGFTAAGTSVQNKVRTITKATVSRDEKTDFLVFTFSGNGFLYKQVRNMVGTLLKIGNGQMPVEQVKVILSSKNRQLAGPTISGNGLYLKEICYEN.

Residue Asp53 is the Nucleophile of the active site. Tyr111 lines the substrate pocket.

It belongs to the tRNA pseudouridine synthase TruA family. In terms of assembly, homodimer.

The enzyme catalyses uridine(38/39/40) in tRNA = pseudouridine(38/39/40) in tRNA. In terms of biological role, formation of pseudouridine at positions 38, 39 and 40 in the anticodon stem and loop of transfer RNAs. This chain is tRNA pseudouridine synthase A, found in Streptococcus pyogenes serotype M3 (strain ATCC BAA-595 / MGAS315).